The primary structure comprises 122 residues: Large ribosomal subunit protein uL14 (122 aa).

The protein belongs to the universal ribosomal protein uL14 family. In terms of assembly, part of the 50S ribosomal subunit. Forms a cluster with proteins L3 and L19. In the 70S ribosome, L14 and L19 interact and together make contacts with the 16S rRNA in bridges B5 and B8.

In terms of biological role, binds to 23S rRNA. Forms part of two intersubunit bridges in the 70S ribosome. This is Large ribosomal subunit protein uL14 from Rhizobium johnstonii (strain DSM 114642 / LMG 32736 / 3841) (Rhizobium leguminosarum bv. viciae).